A 504-amino-acid chain; its full sequence is Glycerol kinase (504 aa).

Residue T14 coordinates ADP. Residues T14, T15, and S16 each contribute to the ATP site. T14 provides a ligand contact to sn-glycerol 3-phosphate. An ADP-binding site is contributed by R18. Sn-glycerol 3-phosphate is bound by residues R84, E85, Y136, and D246. Residues R84, E85, Y136, D246, and Q247 each coordinate glycerol. ADP contacts are provided by T268 and G311. Residues T268, G311, Q315, and G412 each coordinate ATP. ADP contacts are provided by G412 and N416.

This sequence belongs to the FGGY kinase family.

It carries out the reaction glycerol + ATP = sn-glycerol 3-phosphate + ADP + H(+). Its pathway is polyol metabolism; glycerol degradation via glycerol kinase pathway; sn-glycerol 3-phosphate from glycerol: step 1/1. With respect to regulation, inhibited by fructose 1,6-bisphosphate (FBP). Key enzyme in the regulation of glycerol uptake and metabolism. Catalyzes the phosphorylation of glycerol to yield sn-glycerol 3-phosphate. This Aliivibrio fischeri (strain ATCC 700601 / ES114) (Vibrio fischeri) protein is Glycerol kinase.